The primary structure comprises 301 residues: Pseudouridine-5'-phosphate glycosidase (301 aa).

Glu-25 serves as the catalytic Proton donor. Residues Lys-86 and Val-106 each contribute to the substrate site. Asp-138 is a Mn(2+) binding site. 140-142 (SAD) contributes to the substrate binding site. Residue Lys-159 is the Nucleophile of the active site.

It belongs to the pseudouridine-5'-phosphate glycosidase family. As to quaternary structure, homotrimer. Mn(2+) is required as a cofactor.

The enzyme catalyses D-ribose 5-phosphate + uracil = psi-UMP + H2O. In terms of biological role, catalyzes the reversible cleavage of pseudouridine 5'-phosphate (PsiMP) to ribose 5-phosphate and uracil. Functions biologically in the cleavage direction, as part of a pseudouridine degradation pathway. The protein is Pseudouridine-5'-phosphate glycosidase of Geobacillus kaustophilus (strain HTA426).